A 199-amino-acid chain; its full sequence is MKFSPLVDELIQSLRCLPGVGPKSAQRMAFQLLERDRKAGHKLAQALSSAMSDVGHCSSCRTFTEESLCPICASSRRGNSDLICVVETPADVLAIEAGGHFSGRYFVLLGHLSPLDGVGPDELGLSLLETHLASGEVSELILATNPTVEGDATAHFIADMAKQHEVNVSRIAHGVPVGGELEYVDSTTLALSFNGRIPL.

A C4-type zinc finger spans residues 57-72 (CSSCRTFTEESLCPIC). Residues 81 to 176 (DLICVVETPA…NVSRIAHGVP (96 aa)) enclose the Toprim domain.

The protein belongs to the RecR family.

In terms of biological role, may play a role in DNA repair. It seems to be involved in an RecBC-independent recombinational process of DNA repair. It may act with RecF and RecO. This chain is Recombination protein RecR, found in Shewanella loihica (strain ATCC BAA-1088 / PV-4).